We begin with the raw amino-acid sequence, 481 residues long: Glycogen synthase (481 aa).

Residue lysine 15 coordinates ADP-alpha-D-glucose.

It belongs to the glycosyltransferase 1 family. Bacterial/plant glycogen synthase subfamily.

The catalysed reaction is [(1-&gt;4)-alpha-D-glucosyl](n) + ADP-alpha-D-glucose = [(1-&gt;4)-alpha-D-glucosyl](n+1) + ADP + H(+). It participates in glycan biosynthesis; glycogen biosynthesis. Its function is as follows. Synthesizes alpha-1,4-glucan chains using ADP-glucose. The sequence is that of Glycogen synthase from Mesorhizobium japonicum (strain LMG 29417 / CECT 9101 / MAFF 303099) (Mesorhizobium loti (strain MAFF 303099)).